The primary structure comprises 532 residues: Membrane protein insertase YidC (532 aa).

A run of 5 helical transmembrane segments spans residues 7–27 (FFIF…QSQM), 336–356 (LTIL…ITFI), 413–433 (GGFL…YMLI), 450–470 (LSSQ…MFFI), and 492–512 (PVIF…YYII).

It belongs to the OXA1/ALB3/YidC family. Type 1 subfamily. In terms of assembly, interacts with the Sec translocase complex via SecD. Specifically interacts with transmembrane segments of nascent integral membrane proteins during membrane integration.

The protein resides in the cell membrane. Its function is as follows. Required for the insertion and/or proper folding and/or complex formation of integral membrane proteins into the membrane. Involved in integration of membrane proteins that insert both dependently and independently of the Sec translocase complex, as well as at least some lipoproteins. Aids folding of multispanning membrane proteins. This Buchnera aphidicola subsp. Acyrthosiphon pisum (strain APS) (Acyrthosiphon pisum symbiotic bacterium) protein is Membrane protein insertase YidC.